Reading from the N-terminus, the 302-residue chain is Sulfate adenylyltransferase subunit 2 (302 aa).

The segment at arginine 280 to phenylalanine 302 is disordered.

This sequence belongs to the PAPS reductase family. CysD subfamily. Heterodimer composed of CysD, the smaller subunit, and CysN.

The catalysed reaction is sulfate + ATP + H(+) = adenosine 5'-phosphosulfate + diphosphate. It participates in sulfur metabolism; hydrogen sulfide biosynthesis; sulfite from sulfate: step 1/3. Functionally, with CysN forms the ATP sulfurylase (ATPS) that catalyzes the adenylation of sulfate producing adenosine 5'-phosphosulfate (APS) and diphosphate, the first enzymatic step in sulfur assimilation pathway. APS synthesis involves the formation of a high-energy phosphoric-sulfuric acid anhydride bond driven by GTP hydrolysis by CysN coupled to ATP hydrolysis by CysD. The sequence is that of Sulfate adenylyltransferase subunit 2 from Shewanella baltica (strain OS223).